The chain runs to 164 residues: Protein LIGHT-DEPENDENT SHORT HYPOCOTYLS 8 (164 aa).

The 128-residue stretch at 23–150 (RYESQKSRDW…ARGVLYKKKK (128 aa)) folds into the ALOG domain. The Nuclear localization signal signature appears at 148 to 152 (KKKRL).

It belongs to the plant homeotic and developmental regulators ALOG protein family.

Its subcellular location is the nucleus. Functionally, probable transcription regulator that acts as a developmental regulator by promoting cell growth in response to light. This is Protein LIGHT-DEPENDENT SHORT HYPOCOTYLS 8 (LSH8) from Arabidopsis thaliana (Mouse-ear cress).